We begin with the raw amino-acid sequence, 143 residues long: Heat shock protein Hsp-16.48/Hsp-16.49 (143 aa).

Positions 35 to 140 (HNSFNFSDNI…SSRSIPINFV (106 aa)) constitute a sHSP domain.

This sequence belongs to the small heat shock protein (HSP20) family.

This Caenorhabditis elegans protein is Heat shock protein Hsp-16.48/Hsp-16.49 (hsp-16.48).